A 197-amino-acid chain; its full sequence is Probable nicotinate-nucleotide adenylyltransferase (197 aa).

The protein belongs to the NadD family.

The catalysed reaction is nicotinate beta-D-ribonucleotide + ATP + H(+) = deamido-NAD(+) + diphosphate. It functions in the pathway cofactor biosynthesis; NAD(+) biosynthesis; deamido-NAD(+) from nicotinate D-ribonucleotide: step 1/1. Its function is as follows. Catalyzes the reversible adenylation of nicotinate mononucleotide (NaMN) to nicotinic acid adenine dinucleotide (NaAD). The sequence is that of Probable nicotinate-nucleotide adenylyltransferase from Chlorobium phaeobacteroides (strain DSM 266 / SMG 266 / 2430).